Reading from the N-terminus, the 180-residue chain is UPF0340 protein LL0489 (180 aa).

Belongs to the UPF0340 family.

This is UPF0340 protein LL0489 (yeiF) from Lactococcus lactis subsp. lactis (strain IL1403) (Streptococcus lactis).